Reading from the N-terminus, the 146-residue chain is MTIKTGTRRKSRELALQMLFQMDMGKQSADHVEKTFWAERKDLEEEVRSFAIDLFHVAEKRSEEIDKLIEKHAEHWRMERMAAVDRNILRGACAEFMGFPKTPKPVVINESLEIARRFSSPESVQFINGVLDSVARELDAERKKKS.

Belongs to the NusB family.

Its function is as follows. Involved in transcription antitermination. Required for transcription of ribosomal RNA (rRNA) genes. Binds specifically to the boxA antiterminator sequence of the ribosomal RNA (rrn) operons. This chain is Transcription antitermination protein NusB, found in Koribacter versatilis (strain Ellin345).